Consider the following 302-residue polypeptide: Acetylxylan esterase (302 aa).

The signal sequence occupies residues 1 to 20 (MPSVKETLTLLLSQAFLATG). The propeptide occupies 21-31 (SPVDGETVVKR). Glutamine 32 is subject to Pyrrolidone carboxylic acid. The N-linked (GlcNAc...) asparagine glycan is linked to asparagine 94. Serine 121 is a catalytic residue. The segment at 236–273 (QLSSGGSQPPGGGPTSTSRPTSTRTGSSPGPTQTHWGQ) is disordered. The tract at residues 244 to 266 (PPGGGPTSTSRPTSTRTGSSPGP) is linker. Positions 250 to 269 (TSTSRPTSTRTGSSPGPTQT) are enriched in low complexity. The region spanning 266–302 (PTQTHWGQCGGQGWTGPTQCESGTTCQVISQWYSQCL) is the CBM1 domain. 2 disulfide bridges follow: cysteine 274–cysteine 291 and cysteine 285–cysteine 301.

This sequence belongs to the cutinase family. Acetylxylan esterase subfamily. In terms of assembly, monomer. In terms of processing, glycosylated.

The protein resides in the secreted. The enzyme catalyses Deacetylation of xylans and xylo-oligosaccharides.. It functions in the pathway glycan degradation; xylan degradation. With respect to regulation, inhibited by phenylmethylsulfonyl flouride. Degrades acetylated xylans by cleaving acetyl side groups from the hetero-xylan backbone. The polypeptide is Acetylxylan esterase (axe1) (Hypocrea jecorina (Trichoderma reesei)).